Here is a 299-residue protein sequence, read N- to C-terminus: Sulfate adenylyltransferase subunit 2 (299 aa).

Belongs to the PAPS reductase family. CysD subfamily. As to quaternary structure, heterodimer composed of CysD, the smaller subunit, and CysN.

The catalysed reaction is sulfate + ATP + H(+) = adenosine 5'-phosphosulfate + diphosphate. It participates in sulfur metabolism; hydrogen sulfide biosynthesis; sulfite from sulfate: step 1/3. Its function is as follows. With CysN forms the ATP sulfurylase (ATPS) that catalyzes the adenylation of sulfate producing adenosine 5'-phosphosulfate (APS) and diphosphate, the first enzymatic step in sulfur assimilation pathway. APS synthesis involves the formation of a high-energy phosphoric-sulfuric acid anhydride bond driven by GTP hydrolysis by CysN coupled to ATP hydrolysis by CysD. In Colwellia psychrerythraea (strain 34H / ATCC BAA-681) (Vibrio psychroerythus), this protein is Sulfate adenylyltransferase subunit 2.